The chain runs to 178 residues: N-alpha-acetyltransferase 20 (178 aa).

The 156-residue stretch at 2–157 (TSLRPFTCDD…DAYDMRKALS (156 aa)) folds into the N-acetyltransferase domain. A disordered region spans residues 159–178 (DTEKKSIVPLPHPVRPEDIE).

The protein belongs to the acetyltransferase family. ARD1 subfamily. In terms of assembly, component of the N-terminal acetyltransferase B (NatB) complex which is composed of naa20 and naa25.

It localises to the cytoplasm. It is found in the nucleus. It carries out the reaction N-terminal L-methionyl-L-asparaginyl-[protein] + acetyl-CoA = N-terminal N(alpha)-acetyl-L-methionyl-L-asparaginyl-[protein] + CoA + H(+). The enzyme catalyses N-terminal L-methionyl-L-glutaminyl-[protein] + acetyl-CoA = N-terminal N(alpha)-acetyl-L-methionyl-L-glutaminyl-[protein] + CoA + H(+). The catalysed reaction is N-terminal L-methionyl-L-aspartyl-[protein] + acetyl-CoA = N-terminal N(alpha)-acetyl-L-methionyl-L-aspartyl-[protein] + CoA + H(+). It catalyses the reaction N-terminal L-methionyl-L-glutamyl-[protein] + acetyl-CoA = N-terminal N(alpha)-acetyl-L-methionyl-L-glutamyl-[protein] + CoA + H(+). Functionally, catalytic subunit of the NatB complex which catalyzes acetylation of the N-terminal methionine residues of peptides beginning with Met-Asp, Met-Glu, Met-Asn and Met-Gln. Proteins with cell cycle functions are overrepresented in the pool of NatB substrates. Required for maintaining the structure and function of actomyosin fibers and for proper cellular migration. This is N-alpha-acetyltransferase 20 (naa20) from Xenopus tropicalis (Western clawed frog).